Reading from the N-terminus, the 326-residue chain is MPQKFDLIAIGRAAVDLNAVEYNRPLEDTKTFAKFVGGSPANIAIGSAKLGQKVGFIGKVSDDQLGHYVTQYMASVGIDTSNMVKDDTGHKIGLTFTEIISPEESDILMYRNEAADLYLNAHEVSRAYLAQTKMLVISGTGLAQSPSREAILKALLIAKELGVEVIFELDYRPYTWQNAEETSLYYQLVAQKADVIIGTRDEFDVLENHQGRTDQETIATLFQYDANLIVIKSGIQGSNAYTKAGETYHFGVFKTKVLKSFGAGDSFAAGFLYAYQHQLGLETALKYGSAAASIVISQLSSSEAMPNLDQLTAFIEKAEAQEVHQS.

This sequence belongs to the carbohydrate kinase PfkB family.

It carries out the reaction 5-dehydro-2-deoxy-D-gluconate + ATP = 6-phospho-5-dehydro-2-deoxy-D-gluconate + ADP + H(+). The protein operates within polyol metabolism; myo-inositol degradation into acetyl-CoA; acetyl-CoA from myo-inositol: step 5/7. Functionally, catalyzes the phosphorylation of 5-dehydro-2-deoxy-D-gluconate (2-deoxy-5-keto-D-gluconate or DKG) to 6-phospho-5-dehydro-2-deoxy-D-gluconate (DKGP). In Lacticaseibacillus casei (Lactobacillus casei), this protein is 5-dehydro-2-deoxygluconokinase.